The primary structure comprises 78 residues: Large ribosomal subunit protein bL28 (78 aa).

It belongs to the bacterial ribosomal protein bL28 family.

The polypeptide is Large ribosomal subunit protein bL28 (Thioalkalivibrio sulfidiphilus (strain HL-EbGR7)).